We begin with the raw amino-acid sequence, 89 residues long: MPLASDVKQKIMSDYATVERDTGSPEVQVAMLTRRISDLTEHLKVHKHDHHSRRGLLLLVGRRRRLLNYLAKTDINRYRALIERLGLRR.

This sequence belongs to the universal ribosomal protein uS15 family. In terms of assembly, part of the 30S ribosomal subunit. Forms a bridge to the 50S subunit in the 70S ribosome, contacting the 23S rRNA.

Functionally, one of the primary rRNA binding proteins, it binds directly to 16S rRNA where it helps nucleate assembly of the platform of the 30S subunit by binding and bridging several RNA helices of the 16S rRNA. Its function is as follows. Forms an intersubunit bridge (bridge B4) with the 23S rRNA of the 50S subunit in the ribosome. In Frankia casuarinae (strain DSM 45818 / CECT 9043 / HFP020203 / CcI3), this protein is Small ribosomal subunit protein uS15.